A 241-amino-acid polypeptide reads, in one-letter code: Small ribosomal subunit protein eS4 (241 aa).

The S4 RNA-binding domain occupies 37 to 100; the sequence is LPIVVWARDQ…GKHYRILRDK (64 aa).

The protein belongs to the eukaryotic ribosomal protein eS4 family.

This Methanospirillum hungatei JF-1 (strain ATCC 27890 / DSM 864 / NBRC 100397 / JF-1) protein is Small ribosomal subunit protein eS4.